A 364-amino-acid polypeptide reads, in one-letter code: Phosphoserine aminotransferase (364 aa).

An L-glutamate-binding site is contributed by arginine 41. Residues 75 to 76 (AS), tryptophan 100, threonine 155, and glutamine 198 each bind pyridoxal 5'-phosphate. An N6-(pyridoxal phosphate)lysine modification is found at lysine 199. A pyridoxal 5'-phosphate-binding site is contributed by 239-240 (NT).

Belongs to the class-V pyridoxal-phosphate-dependent aminotransferase family. SerC subfamily. In terms of assembly, homodimer. Requires pyridoxal 5'-phosphate as cofactor.

It is found in the cytoplasm. The enzyme catalyses O-phospho-L-serine + 2-oxoglutarate = 3-phosphooxypyruvate + L-glutamate. The catalysed reaction is 4-(phosphooxy)-L-threonine + 2-oxoglutarate = (R)-3-hydroxy-2-oxo-4-phosphooxybutanoate + L-glutamate. The protein operates within amino-acid biosynthesis; L-serine biosynthesis; L-serine from 3-phospho-D-glycerate: step 2/3. In terms of biological role, catalyzes the reversible conversion of 3-phosphohydroxypyruvate to phosphoserine and of 3-hydroxy-2-oxo-4-phosphonooxybutanoate to phosphohydroxythreonine. The chain is Phosphoserine aminotransferase from Streptococcus thermophilus (strain ATCC BAA-250 / LMG 18311).